The following is a 144-amino-acid chain: Putative low molecular weight protein-tyrosine-phosphatase (144 aa).

Cys-9 acts as the Nucleophile in catalysis. Arg-15 is an active-site residue. Asp-115 serves as the catalytic Proton donor.

This sequence belongs to the low molecular weight phosphotyrosine protein phosphatase family.

The catalysed reaction is O-phospho-L-tyrosyl-[protein] + H2O = L-tyrosyl-[protein] + phosphate. The protein is Putative low molecular weight protein-tyrosine-phosphatase of Klebsiella pneumoniae.